The sequence spans 159 residues: Large ribosomal subunit protein uL30 (159 aa).

This sequence belongs to the universal ribosomal protein uL30 family. Part of the 50S ribosomal subunit.

The polypeptide is Large ribosomal subunit protein uL30 (Aeropyrum pernix (strain ATCC 700893 / DSM 11879 / JCM 9820 / NBRC 100138 / K1)).